Here is a 369-residue protein sequence, read N- to C-terminus: 3 beta-hydroxysteroid dehydrogenase type 7 (369 aa).

The active-site Proton acceptor is the tyrosine 159. Lysine 163 lines the NAD(+) pocket. 2 consecutive transmembrane segments (helical) span residues 289–309 (LLPY…QWLL) and 311–331 (PLVL…NTTF).

It belongs to the 3-beta-HSD family.

The protein resides in the endoplasmic reticulum membrane. It catalyses the reaction 7alpha-hydroxycholesterol + NAD(+) = 7alpha-hydroxycholest-4-en-3-one + NADH + H(+). The enzyme catalyses 7alpha,25-dihydroxycholesterol + NAD(+) = 7alpha,25-dihydroxy-4-cholesten-3-one + NADH + H(+). It carries out the reaction (25R)-cholest-5-en-3beta,7alpha,26-triol + NAD(+) = (25R)-7alpha,26-dihydroxycholest-4-en-3-one + NADH + H(+). The catalysed reaction is (24S)-7alpha-dihydroxycholesterol + NAD(+) = (24S)-7alpha,24-dihydroxycholest-4-en-3-one + NADH + H(+). It participates in lipid metabolism; steroid biosynthesis. Functionally, the 3-beta-HSD enzymatic system plays a crucial role in the biosynthesis of all classes of hormonal steroids. HSD VII is active against four 7-alpha-hydroxylated sterols. Does not metabolize several different C(19/21) steroids as substrates. Involved in bile acid synthesis. Plays a key role in cell positioning and movement in lymphoid tissues by mediating degradation of 7-alpha,25-dihydroxycholesterol (7-alpha,25-OHC): 7-alpha,25-OHC acts as a ligand for the G protein-coupled receptor GPR183/EBI2, a chemotactic receptor for a number of lymphoid cells. In Homo sapiens (Human), this protein is 3 beta-hydroxysteroid dehydrogenase type 7.